Here is a 156-residue protein sequence, read N- to C-terminus: Small ribosomal subunit protein uS7 (156 aa).

This sequence belongs to the universal ribosomal protein uS7 family. In terms of assembly, part of the 30S ribosomal subunit. Contacts proteins S9 and S11.

In terms of biological role, one of the primary rRNA binding proteins, it binds directly to 16S rRNA where it nucleates assembly of the head domain of the 30S subunit. Is located at the subunit interface close to the decoding center, probably blocks exit of the E-site tRNA. This Anoxybacillus flavithermus (strain DSM 21510 / WK1) protein is Small ribosomal subunit protein uS7.